Consider the following 312-residue polypeptide: MKVAVLGAAGGIGQALALLLKTQLPAGSDLSLYDIAPVTPGVAVDLSHIPTDVTIAGFAGMDPTDALVGADVVLISAGVARKPGMDRSDLFNINAGIIKNLAGKCAEVCPNACIGIITNPVNTTVPIAAEVLKQAGVYDKRKLFGITTLDVIRSETFVSELKGISLADVEVPVIGGHSGVTILPLLSQVKGVEFTAEEIATLTPRIQNAGTEVVEAKAGGGSATLSMGQAAARFGLSLVRALQGEEGIVECTYVDGGSEHATFFAQPVLLGKNGVEEVLAYGELSEFETNARDAMLEELKANITLGEEFVAG.

Residues 7–13 (GAAGGIG) and Asp-34 each bind NAD(+). The substrate site is built by Arg-81 and Arg-87. Residues Asn-94 and 117–119 (ITN) contribute to the NAD(+) site. Residues Asn-119 and Arg-153 each contribute to the substrate site. The Proton acceptor role is filled by His-177. Residue Met-227 coordinates NAD(+).

Belongs to the LDH/MDH superfamily. MDH type 1 family. Homodimer.

It carries out the reaction (S)-malate + NAD(+) = oxaloacetate + NADH + H(+). Its function is as follows. Catalyzes the reversible oxidation of malate to oxaloacetate. The protein is Malate dehydrogenase of Moritella marina (Vibrio marinus).